The primary structure comprises 344 residues: Sorting nexin-16 (344 aa).

Pro residues predominate over residues methionine 1–methionine 10. A disordered region spans residues methionine 1–leucine 72. A compositionally biased stretch (polar residues) spans asparagine 14–arginine 26. The span at serine 27–serine 40 shows a compositional bias: low complexity. The span at leucine 52 to cysteine 68 shows a compositional bias: polar residues. Residues aspartate 105–glycine 218 enclose the PX domain. The a 1,2-diacyl-sn-glycero-3-phospho-(1D-myo-inositol-3-phosphate) site is built by arginine 144, threonine 146, and arginine 184. Serine 222 is subject to Phosphoserine. Positions leucine 223–glutamate 278 form a coiled coil.

Belongs to the sorting nexin family. Homooligomer. Interacts with EGFR.

It is found in the early endosome membrane. The protein localises to the late endosome membrane. It localises to the cytoplasm. The protein resides in the lysosome. Functionally, may be involved in several stages of intracellular trafficking. Plays a role in protein transport from early to late endosomes. Plays a role in protein transport to the lysosome. Promotes degradation of EGFR after EGF signaling. This is Sorting nexin-16 (Snx16) from Mus musculus (Mouse).